A 237-amino-acid chain; its full sequence is UPF0758 protein Aave_3773 (237 aa).

The MPN domain occupies 115-237; sequence LFHSPRAVRD…SLSMAEEGLI (123 aa). Zn(2+)-binding residues include histidine 186, histidine 188, and aspartate 199. Residues 186 to 199 carry the JAMM motif motif; it reads HNHPSGQVQPSRAD.

It belongs to the UPF0758 family.

The sequence is that of UPF0758 protein Aave_3773 from Paracidovorax citrulli (strain AAC00-1) (Acidovorax citrulli).